Here is a 755-residue protein sequence, read N- to C-terminus: Oligopeptide transporter 1 (755 aa).

Transmembrane regions (helical) follow at residues 58 to 78, 82 to 102, 134 to 154, 165 to 185, 226 to 246, 298 to 318, 370 to 390, 434 to 454, 462 to 482, 546 to 566, 614 to 634, 664 to 684, and 697 to 717; these read TWTLGLFSCILLAFVNQFFGF, QLWVSSVAAQIVTLPLGKLMA, ITIFANTGAGGVYATSIITIV, AAAMLLTQTTQLLGYGWAGIF, FFIIVFCVSFAYYIIPGYLFP, FFAIANFFGGFFIFLYIVLPI, YLSVMFALLYGLSFGSLCATI, WWFIAVLVISFAFALYACEGF, WWGLILACAIALFFTLPIGVI, FIVQLVATVVASTVCFGTTWW, GIYPGMNWFFLIGLLAPVPFW, AKAVHYWSWAIVGVVFNYYIF, and ILSAALDAGTAIMGVLIFFAF.

The protein belongs to the oligopeptide OPT transporter (TC 2.A.67.1) family. As to expression, highly expressed in flowers, and moderately expressed in leaves and stems.

The protein resides in the membrane. Functionally, involved in the translocation of tetra- and pentapeptides across the cellular membrane in an energy-dependent manner. This is Oligopeptide transporter 1 (OPT1) from Arabidopsis thaliana (Mouse-ear cress).